The sequence spans 85 residues: Large ribosomal subunit protein bL27 (85 aa).

It belongs to the bacterial ribosomal protein bL27 family.

This chain is Large ribosomal subunit protein bL27, found in Variovorax paradoxus (strain S110).